The primary structure comprises 544 residues: Rubrofusarin-specific efflux pump aurT (544 aa).

The span at 1 to 12 (MTDNTDMEKLDR) shows a compositional bias: basic and acidic residues. A disordered region spans residues 1–42 (MTDNTDMEKLDRATTPTPIPNEAPPTSEPSESKPEEAEDESK). Over residues 17-27 (TPIPNEAPPTS) the composition is skewed to pro residues. The span at 30 to 42 (SESKPEEAEDESK) shows a compositional bias: basic and acidic residues. The next 8 helical transmembrane spans lie at 45–65 (HGLK…LVAL), 89–111 (WYAS…IFTF), 116–136 (TVYL…GVAP), 146–166 (AIAG…ITTV), 177–197 (GMMG…GGAF), 205–225 (WCFY…ILLF), 246–266 (WGNL…QWGG), and 276–296 (IVAL…IQIW). An N-linked (GlcNAc...) asparagine glycan is attached at Asn-300. Transmembrane regions (helical) follow at residues 318–338 (IFAF…PIWF), 357–377 (VLSL…VGWF), 380–400 (VFFS…TFVV), 407–427 (WIGY…LASL), 444–464 (LMFF…QAVF), and 514–534 (YFYV…GIEW).

Belongs to the major facilitator superfamily. TCR/Tet family.

It localises to the cell membrane. Its pathway is pigment biosynthesis. In terms of biological role, rubrofusarin-specific efflux pump; part of the gene cluster that mediates the biosynthesis of aurofusarin, a red mycelium pigment which is acting as a mycotoxin. The first step is performed by the polyketide synthase which condenses one acetyl-CoA and 6 malonyl-CoA units to form the first intermediate, the cyclic heptaketide and yellow pigment YWA1. The C2 hydroxyl group in the pyrone ring of YWA1 is probably formed during ring closure by an aldol-type cyclization reaction. The dehydratase aurZ then acts as the first tailoring enzyme in the aurofusarin biosynthetic pathway by converting YWA1 to nor-rubrofusarin. Nor-rubrofusarin is then methylated to rubrofusarin by the O-methyltransferase aurJ. Rubrofusarin is then transported across the plasma membrane by the rubrofusarin-specific pump aurT for further enzymatic processing by the extracellular complex composed of GIP1, aurF, aurO and aurS to yield aurofusarin. In Gibberella zeae (strain ATCC MYA-4620 / CBS 123657 / FGSC 9075 / NRRL 31084 / PH-1) (Wheat head blight fungus), this protein is Rubrofusarin-specific efflux pump aurT.